Here is a 251-residue protein sequence, read N- to C-terminus: Imidazole glycerol phosphate synthase subunit HisF (251 aa).

Residues Asp11 and Asp130 contribute to the active site.

Belongs to the HisA/HisF family. Heterodimer of HisH and HisF.

The protein localises to the cytoplasm. It carries out the reaction 5-[(5-phospho-1-deoxy-D-ribulos-1-ylimino)methylamino]-1-(5-phospho-beta-D-ribosyl)imidazole-4-carboxamide + L-glutamine = D-erythro-1-(imidazol-4-yl)glycerol 3-phosphate + 5-amino-1-(5-phospho-beta-D-ribosyl)imidazole-4-carboxamide + L-glutamate + H(+). It functions in the pathway amino-acid biosynthesis; L-histidine biosynthesis; L-histidine from 5-phospho-alpha-D-ribose 1-diphosphate: step 5/9. IGPS catalyzes the conversion of PRFAR and glutamine to IGP, AICAR and glutamate. The HisF subunit catalyzes the cyclization activity that produces IGP and AICAR from PRFAR using the ammonia provided by the HisH subunit. The sequence is that of Imidazole glycerol phosphate synthase subunit HisF from Natranaerobius thermophilus (strain ATCC BAA-1301 / DSM 18059 / JW/NM-WN-LF).